The sequence spans 77 residues: Putative neurotoxin 1 (77 aa).

Positions 1-25 (MKAFIVILSIAIVLLLIVSIKETSA) are cleaved as a signal peptide. The propeptide occupies 26-46 (KDCKQECVKRYTKGDLTNFLK).

It belongs to the scolopendra neurotoxin 3 family. Contains 2 disulfide bonds. As to expression, expressed by the venom gland.

The protein localises to the secreted. In Scolopendra subspinipes (Vietnamese centipede), this protein is Putative neurotoxin 1.